Reading from the N-terminus, the 428-residue chain is Enolase (428 aa).

Glutamine 163 lines the (2R)-2-phosphoglycerate pocket. The active-site Proton donor is glutamate 205. Mg(2+) is bound by residues aspartate 242, glutamate 285, and aspartate 312. Residues lysine 337, arginine 366, serine 367, and lysine 388 each contribute to the (2R)-2-phosphoglycerate site. The active-site Proton acceptor is lysine 337.

This sequence belongs to the enolase family. The cofactor is Mg(2+).

It localises to the cytoplasm. It is found in the secreted. The protein localises to the cell surface. The catalysed reaction is (2R)-2-phosphoglycerate = phosphoenolpyruvate + H2O. The protein operates within carbohydrate degradation; glycolysis; pyruvate from D-glyceraldehyde 3-phosphate: step 4/5. Its function is as follows. Catalyzes the reversible conversion of 2-phosphoglycerate (2-PG) into phosphoenolpyruvate (PEP). It is essential for the degradation of carbohydrates via glycolysis. This is Enolase from Erythrobacter litoralis (strain HTCC2594).